The following is an 82-amino-acid chain: Small ribosomal subunit protein bS16 (82 aa).

It belongs to the bacterial ribosomal protein bS16 family.

The chain is Small ribosomal subunit protein bS16 from Shewanella sp. (strain ANA-3).